We begin with the raw amino-acid sequence, 559 residues long: SH3 domain-binding protein 2 (559 aa).

The PH domain maps to 26-130 (GVAKAGYLHK…WMAFVRREIG (105 aa)). The segment at 164-449 (LSSYPMDNED…EDSDEDYEKV (286 aa)) is disordered. The segment covering 170-184 (DNEDYEHEDEDDSYL) has biased composition (acidic residues). Phosphotyrosine; by SYK occurs at positions 174 and 183. The SH3-binding signature appears at 201-210 (PPAYPPPPVP). Composition is skewed to pro residues over residues 202-213 (PAYPPPPVPVPR) and 233-242 (PLLPPPPPKR). The segment covering 252–265 (EDAKDALGLRRVEP) has biased composition (basic and acidic residues). Ser-277 carries the post-translational modification Phosphoserine. Over residues 313 to 327 (TSSVSSSTTMAVATS) the composition is skewed to low complexity. Basic and acidic residues predominate over residues 360 to 371 (KIAEEPSPREAA). Over residues 375-386 (PVPPVAPRPPVQ) the composition is skewed to pro residues. Ser-414 and Ser-425 each carry phosphoserine. Over residues 437 to 446 (TGEEDSDEDY) the composition is skewed to acidic residues. Phosphotyrosine; by SYK is present on Tyr-446. One can recognise an SH2 domain in the interval 455–553 (VFVNTTESCE…HQSLLLRHPY (99 aa)).

Post-translationally, phosphorylated. Phosphorylation at Tyr-446 may stimulate the activity of the LYN kinase.

In terms of biological role, binds differentially to the SH3 domains of certain proteins of signal transduction pathways. Binds to phosphatidylinositols; linking the hemopoietic tyrosine kinase fes to the cytoplasmic membrane in a phosphorylation dependent mechanism. The polypeptide is SH3 domain-binding protein 2 (Sh3bp2) (Mus musculus (Mouse)).